We begin with the raw amino-acid sequence, 248 residues long: NH(3)-dependent NAD(+) synthetase (248 aa).

Residue 31–38 (GVSGGVDS) participates in ATP binding. Aspartate 37 lines the Mg(2+) pocket. Arginine 114 lines the deamido-NAD(+) pocket. An ATP-binding site is contributed by threonine 134. Residue glutamate 139 coordinates Mg(2+). Deamido-NAD(+) contacts are provided by lysine 147 and aspartate 154. The ATP site is built by lysine 163 and serine 185. 236–237 (HK) serves as a coordination point for deamido-NAD(+).

Belongs to the NAD synthetase family. Homodimer.

It carries out the reaction deamido-NAD(+) + NH4(+) + ATP = AMP + diphosphate + NAD(+) + H(+). It functions in the pathway cofactor biosynthesis; NAD(+) biosynthesis; NAD(+) from deamido-NAD(+) (ammonia route): step 1/1. Functionally, catalyzes the ATP-dependent amidation of deamido-NAD to form NAD. Uses ammonia as a nitrogen source. This Methanoregula boonei (strain DSM 21154 / JCM 14090 / 6A8) protein is NH(3)-dependent NAD(+) synthetase.